Consider the following 363-residue polypeptide: Ribosomal RNA large subunit methyltransferase M (363 aa).

Residues Ser-194, 227-230 (CPGG), Asp-246, Asp-266, and Asp-284 contribute to the S-adenosyl-L-methionine site. Lys-313 functions as the Proton acceptor in the catalytic mechanism.

Belongs to the class I-like SAM-binding methyltransferase superfamily. RNA methyltransferase RlmE family. RlmM subfamily. As to quaternary structure, monomer.

It localises to the cytoplasm. The enzyme catalyses cytidine(2498) in 23S rRNA + S-adenosyl-L-methionine = 2'-O-methylcytidine(2498) in 23S rRNA + S-adenosyl-L-homocysteine + H(+). In terms of biological role, catalyzes the 2'-O-methylation at nucleotide C2498 in 23S rRNA. The chain is Ribosomal RNA large subunit methyltransferase M from Haemophilus influenzae (strain PittGG).